A 590-amino-acid chain; its full sequence is Muscarinic acetylcholine receptor M3 (590 aa).

At Met1 to Gln67 the chain is on the extracellular side. N-linked (GlcNAc...) asparagine glycans are attached at residues Asn5, Asn6, Asn15, Asn41, and Asn48. A helical transmembrane segment spans residues Val68–Val91. Residues Ser92 to Asn104 are Cytoplasmic-facing. The chain crosses the membrane as a helical span at residues Tyr105 to Ile130. Residues Met131–Asp142 are Extracellular-facing. Cys141 and Cys221 are joined by a disulfide. The chain crosses the membrane as a helical span at residues Leu143–Phe164. Over Asp165 to Arg184 the chain is Cytoplasmic. Residues Ala185 to Phe206 form a helical membrane-spanning segment. The Extracellular portion of the chain corresponds to Trp207–Pro229. Residues Thr230–Trp252 traverse the membrane as a helical segment. Residues Arg253 to Gln491 are Cytoplasmic-facing. Positions Ala275–Val281 match the Basolateral sorting signal motif. The segment at Ser323–Ile357 is disordered. Positions Ser334–Ser345 are enriched in low complexity. Residue Ser385 is modified to Phosphoserine. A helical membrane pass occupies residues Thr492–Asn514. Residues Thr515–Trp526 lie on the Extracellular side of the membrane. Cys517 and Cys520 form a disulfide bridge. A helical transmembrane segment spans residues Asn527–Leu546. Residues Cys547–Leu590 lie on the Cytoplasmic side of the membrane.

It belongs to the G-protein coupled receptor 1 family. Muscarinic acetylcholine receptor subfamily. CHRM3 sub-subfamily. In terms of assembly, homodimer; the dimers can form tetramers. Interacts with NALCN. Interacts with TMEM147.

The protein localises to the cell membrane. It localises to the postsynaptic cell membrane. The protein resides in the basolateral cell membrane. It is found in the endoplasmic reticulum membrane. Functionally, the muscarinic acetylcholine receptor mediates various cellular responses, including inhibition of adenylate cyclase, breakdown of phosphoinositides and modulation of potassium channels through the action of G proteins. Primary transducing effect is Pi turnover. This Gorilla gorilla gorilla (Western lowland gorilla) protein is Muscarinic acetylcholine receptor M3 (CHRM3).